The chain runs to 190 residues: Holliday junction branch migration complex subunit RuvA (190 aa).

The interval 1-64 is domain I; it reads MIGRITGTLI…EDAQLLYGFG (64 aa). The tract at residues 65 to 137 is domain II; it reads SSAERSTFRE…MRGKLGADIG (73 aa). The segment at 137-141 is flexible linker; it reads GATPH. Positions 142 to 190 are domain III; the sequence is AASGHQSDILNALLALGYSDKESQAALKKLPDGVDVSEGIRLALKALVR.

Belongs to the RuvA family. In terms of assembly, homotetramer. Forms an RuvA(8)-RuvB(12)-Holliday junction (HJ) complex. HJ DNA is sandwiched between 2 RuvA tetramers; dsDNA enters through RuvA and exits via RuvB. An RuvB hexamer assembles on each DNA strand where it exits the tetramer. Each RuvB hexamer is contacted by two RuvA subunits (via domain III) on 2 adjacent RuvB subunits; this complex drives branch migration. In the full resolvosome a probable DNA-RuvA(4)-RuvB(12)-RuvC(2) complex forms which resolves the HJ.

The protein localises to the cytoplasm. Its function is as follows. The RuvA-RuvB-RuvC complex processes Holliday junction (HJ) DNA during genetic recombination and DNA repair, while the RuvA-RuvB complex plays an important role in the rescue of blocked DNA replication forks via replication fork reversal (RFR). RuvA specifically binds to HJ cruciform DNA, conferring on it an open structure. The RuvB hexamer acts as an ATP-dependent pump, pulling dsDNA into and through the RuvAB complex. HJ branch migration allows RuvC to scan DNA until it finds its consensus sequence, where it cleaves and resolves the cruciform DNA. This Bordetella pertussis (strain Tohama I / ATCC BAA-589 / NCTC 13251) protein is Holliday junction branch migration complex subunit RuvA.